A 906-amino-acid chain; its full sequence is Aconitate hydratase A (906 aa).

Residues methionine 1–serine 2 constitute a propeptide that is removed on maturation. Residues cysteine 441, cysteine 507, and cysteine 510 each coordinate [4Fe-4S] cluster.

Belongs to the aconitase/IPM isomerase family. As to quaternary structure, monomer. [4Fe-4S] cluster serves as cofactor.

The catalysed reaction is citrate = D-threo-isocitrate. It carries out the reaction (2S,3R)-3-hydroxybutane-1,2,3-tricarboxylate = 2-methyl-cis-aconitate + H2O. It functions in the pathway carbohydrate metabolism; tricarboxylic acid cycle; isocitrate from oxaloacetate: step 2/2. Its pathway is organic acid metabolism; propanoate degradation. Involved in the catabolism of short chain fatty acids (SCFA) via the tricarboxylic acid (TCA)(acetyl degradation route) and probably the 2-methylcitrate cycle I (propionate degradation route). Catalyzes the reversible isomerization of citrate to isocitrate via cis-aconitate. Could catalyze the hydration of 2-methyl-cis-aconitate to yield (2R,3S)-2-methylisocitrate. The apo form of AcnA functions as a RNA-binding regulatory protein. The polypeptide is Aconitate hydratase A (acn) (Deinococcus radiodurans (strain ATCC 13939 / DSM 20539 / JCM 16871 / CCUG 27074 / LMG 4051 / NBRC 15346 / NCIMB 9279 / VKM B-1422 / R1)).